The primary structure comprises 770 residues: Integrin beta-2 (770 aa).

The N-terminal stretch at 1-22 (MLPQRPQLLLLAGLLSLQSVLS) is a signal peptide. Gln23 bears the Pyrrolidone carboxylic acid mark. Topologically, residues 23–701 (QECTKYKVST…DMLECVKGPN (679 aa)) are extracellular. Residues 24–74 (ECTKYKVSTCRDCIESGPSCAWCQKLNFTGQGEPDSTRCDTRAQLLSKGCP) form the PSI domain. 28 disulfide bridges follow: Cys25–Cys43, Cys33–Cys447, Cys36–Cys62, Cys46–Cys73, Cys191–Cys198, Cys246–Cys286, Cys386–Cys400, Cys420–Cys445, Cys449–Cys467, Cys459–Cys470, Cys472–Cys481, Cys483–Cys514, Cys497–Cys512, Cys506–Cys517, Cys519–Cys534, Cys536–Cys559, Cys541–Cys557, Cys549–Cys562, Cys564–Cys573, Cys575–Cys598, Cys582–Cys596, Cys590–Cys601, Cys603–Cys612, Cys615–Cys618, Cys622–Cys663, Cys628–Cys647, Cys631–Cys643, and Cys671–Cys696. N-linked (GlcNAc...) asparagine glycans are attached at residues Asn50 and Asn116. Residues 124-363 (GYPIDLYYLM…ELIKSAYNKL (240 aa)) enclose the VWFA domain. Ser136 and Ser138 together coordinate Mg(2+). Residues Ser138, Asp141, Asp142, and Asp173 each contribute to the Ca(2+) site. Ca(2+)-binding residues include Asn229, Asp231, Pro233, and Glu234. Glu234 contributes to the Mg(2+) binding site. Asn254 is a glycosylation site (N-linked (GlcNAc...) asparagine). Ca(2+) contacts are provided by Asp264 and Glu347. The short motif at 397-399 (RGD) is the Cell attachment site element. 4 consecutive I-EGF domains span residues 449–482 (CREA…KNCE), 483–535 (CQTH…QFCE), 536–574 (CDNV…SACQ), and 575–613 (CLKS…PLCI). An N-linked (GlcNAc...) asparagine glycan is attached at Asn501. The N-linked (GlcNAc...) asparagine glycan is linked to Asn642. The chain crosses the membrane as a helical span at residues 702–724 (IAAIVGGTVGGVVLVGILLLAIW). The Cytoplasmic segment spans residues 725 to 770 (KALTHLSDLREYHRFEKEKLKSQWNNDNPLFKSATTTVMNPKFAES). Phosphoserine is present on residues Ser746 and Ser757. A phosphothreonine mark is found at Thr759 and Thr761.

This sequence belongs to the integrin beta chain family. In terms of assembly, heterodimer of an alpha and a beta subunit. The ITGB2 beta subunit associates with the ITGAL, ITGAM, ITGAX or ITGAD alpha subunits. Found in a complex with CD177 and ITGAM/CD11b. Interacts with FGR. Interacts with COPS5 and RANBP9. Interacts with FLNA (via filamin repeats 4, 9, 12, 17, 19, 21, and 23). Interacts with THBD. Both Ser-746 and Ser-757 become phosphorylated when T-cells are exposed to phorbol esters. Phosphorylation on Thr-759 (but not on Ser-757) allows interaction with 14-3-3 proteins.

Its subcellular location is the cell membrane. The protein localises to the membrane raft. Its function is as follows. Integrin ITGAL/ITGB2 is a receptor for ICAM1, ICAM2, ICAM3 and ICAM4. Integrin ITGAL/ITGB2 is also a receptor for the secreted form of ubiquitin-like protein ISG15; the interaction is mediated by ITGAL. Integrins ITGAM/ITGB2 and ITGAX/ITGB2 are receptors for the iC3b fragment of the third complement component and for fibrinogen. Integrin ITGAX/ITGB2 recognizes the sequence G-P-R in fibrinogen alpha-chain. Integrin ITGAM/ITGB2 recognizes P1 and P2 peptides of fibrinogen gamma chain. Integrin ITGAM/ITGB2 is also a receptor for factor X. Integrin ITGAD/ITGB2 is a receptor for ICAM3 and VCAM1. Contributes to natural killer cell cytotoxicity. Involved in leukocyte adhesion and transmigration of leukocytes including T-cells and neutrophils. Triggers neutrophil transmigration during lung injury through PTK2B/PYK2-mediated activation. Integrin ITGAL/ITGB2 in association with ICAM3, contributes to apoptotic neutrophil phagocytosis by macrophages. In association with alpha subunit ITGAM/CD11b, required for CD177-PRTN3-mediated activation of TNF primed neutrophils. This Ovis canadensis (Bighorn sheep) protein is Integrin beta-2 (ITGB2).